The chain runs to 1390 residues: DNA-directed RNA polymerase subunit beta (1390 aa).

This sequence belongs to the RNA polymerase beta chain family. In terms of assembly, the RNAP catalytic core consists of 2 alpha, 1 beta, 1 beta' and 1 omega subunit. When a sigma factor is associated with the core the holoenzyme is formed, which can initiate transcription.

The catalysed reaction is RNA(n) + a ribonucleoside 5'-triphosphate = RNA(n+1) + diphosphate. DNA-dependent RNA polymerase catalyzes the transcription of DNA into RNA using the four ribonucleoside triphosphates as substrates. The chain is DNA-directed RNA polymerase subunit beta from Chromobacterium violaceum (strain ATCC 12472 / DSM 30191 / JCM 1249 / CCUG 213 / NBRC 12614 / NCIMB 9131 / NCTC 9757 / MK).